A 420-amino-acid polypeptide reads, in one-letter code: E3 ubiquitin-protein ligase pellino homolog 2 (420 aa).

The FHA; atypical domain occupies 15 to 202; that stretch reads EPVKYGELVV…MHPRGGFTEE (188 aa).

This sequence belongs to the pellino family. Interacts with TRAF6, IRAK1, IRAK4 and MAP3K7. Interacts with BCL10; this interaction is impaired by SOCS3. Post-translationally, phosphorylated by IRAK1 and IRAK4 enhancing its E3 ligase activity.

The enzyme catalyses S-ubiquitinyl-[E2 ubiquitin-conjugating enzyme]-L-cysteine + [acceptor protein]-L-lysine = [E2 ubiquitin-conjugating enzyme]-L-cysteine + N(6)-ubiquitinyl-[acceptor protein]-L-lysine.. The protein operates within protein modification; protein ubiquitination. In terms of biological role, E3 ubiquitin ligase catalyzing the covalent attachment of ubiquitin moieties onto substrate proteins. Involved in the TLR and IL-1 signaling pathways via interaction with the complex containing IRAK kinases and TRAF6. Mediates IL1B-induced IRAK1 'Lys-63'-linked polyubiquitination and possibly 'Lys-48'-linked ubiquitination. May be important for LPS- and IL1B-induced MAP3K7-dependent, but not MAP3K3-dependent, NF-kappa-B activation. Can activate the MAP (mitogen activated protein) kinase pathway leading to activation of ELK1. This Homo sapiens (Human) protein is E3 ubiquitin-protein ligase pellino homolog 2 (PELI2).